The following is a 92-amino-acid chain: Beta-2-microglobulin (92 aa).

In terms of domain architecture, Ig-like C1-type spans 2–91 (PQIQVYTRHP…VSLNEPKTVI (90 aa)). Cys-22 and Cys-77 are oxidised to a cystine.

This sequence belongs to the beta-2-microglobulin family. As to quaternary structure, heterodimer of an alpha chain and a beta chain. Beta-2-microglobulin is the beta-chain of major histocompatibility complex class I molecules.

Its subcellular location is the secreted. Functionally, component of the class I major histocompatibility complex (MHC). Involved in the presentation of peptide antigens to the immune system. In Mus cervicolor (Fawn-colored mouse), this protein is Beta-2-microglobulin (B2m).